The chain runs to 343 residues: Aspartate carbamoyltransferase catalytic subunit (343 aa).

Carbamoyl phosphate contacts are provided by R91 and T92. K119 contributes to the L-aspartate binding site. 3 residues coordinate carbamoyl phosphate: R141, H171, and Q174. Residues R204 and R259 each coordinate L-aspartate. Carbamoyl phosphate-binding residues include G300 and P301.

It belongs to the aspartate/ornithine carbamoyltransferase superfamily. ATCase family. In terms of assembly, heterododecamer (2C3:3R2) of six catalytic PyrB chains organized as two trimers (C3), and six regulatory PyrI chains organized as three dimers (R2).

The catalysed reaction is carbamoyl phosphate + L-aspartate = N-carbamoyl-L-aspartate + phosphate + H(+). It functions in the pathway pyrimidine metabolism; UMP biosynthesis via de novo pathway; (S)-dihydroorotate from bicarbonate: step 2/3. Functionally, catalyzes the condensation of carbamoyl phosphate and aspartate to form carbamoyl aspartate and inorganic phosphate, the committed step in the de novo pyrimidine nucleotide biosynthesis pathway. The polypeptide is Aspartate carbamoyltransferase catalytic subunit (Burkholderia mallei (strain NCTC 10247)).